The chain runs to 166 residues: Probable chemoreceptor glutamine deamidase CheD (166 aa).

It belongs to the CheD family.

The catalysed reaction is L-glutaminyl-[protein] + H2O = L-glutamyl-[protein] + NH4(+). Its function is as follows. Probably deamidates glutamine residues to glutamate on methyl-accepting chemotaxis receptors (MCPs), playing an important role in chemotaxis. The sequence is that of Probable chemoreceptor glutamine deamidase CheD from Desulforamulus reducens (strain ATCC BAA-1160 / DSM 100696 / MI-1) (Desulfotomaculum reducens).